An 861-amino-acid polypeptide reads, in one-letter code: DNA topoisomerase 1 (861 aa).

The Toprim domain occupies 3-141 (KSLVIVESPA…KFSRVVFNEI (139 aa)). The Mg(2+) site is built by E9 and D110. Residues 157–572 (NMNRVHAQQA…DFFKKFSEQL (416 aa)) enclose the Topo IA-type catalytic domain. An interaction with DNA region spans residues 191–196 (SAGRVQ). Y318 (O-(5'-phospho-DNA)-tyrosine intermediate) is an active-site residue. 3 consecutive C4-type zinc fingers follow at residues 596–628 (CPICCKKMGIKTAITGVFLSCLGYNNTDNKKRC), 658–685 (CDICNMYMDSYFINEKLKLHICANNPSC), and 707–732 (CEKCYNNMKLKIGPFGKFFTCINKIC).

The protein belongs to the type IA topoisomerase family. As to quaternary structure, monomer. Mg(2+) serves as cofactor.

The catalysed reaction is ATP-independent breakage of single-stranded DNA, followed by passage and rejoining.. In terms of biological role, releases the supercoiling and torsional tension of DNA, which is introduced during the DNA replication and transcription, by transiently cleaving and rejoining one strand of the DNA duplex. Introduces a single-strand break via transesterification at a target site in duplex DNA. The scissile phosphodiester is attacked by the catalytic tyrosine of the enzyme, resulting in the formation of a DNA-(5'-phosphotyrosyl)-enzyme intermediate and the expulsion of a 3'-OH DNA strand. The free DNA strand then undergoes passage around the unbroken strand, thus removing DNA supercoils. Finally, in the religation step, the DNA 3'-OH attacks the covalent intermediate to expel the active-site tyrosine and restore the DNA phosphodiester backbone. The chain is DNA topoisomerase 1 from Buchnera aphidicola subsp. Acyrthosiphon pisum (strain APS) (Acyrthosiphon pisum symbiotic bacterium).